A 470-amino-acid polypeptide reads, in one-letter code: Argininosuccinate lyase (470 aa).

Belongs to the lyase 1 family. Argininosuccinate lyase subfamily.

The protein resides in the cytoplasm. It carries out the reaction 2-(N(omega)-L-arginino)succinate = fumarate + L-arginine. The protein operates within amino-acid biosynthesis; L-arginine biosynthesis; L-arginine from L-ornithine and carbamoyl phosphate: step 3/3. In Mycobacterium leprae (strain Br4923), this protein is Argininosuccinate lyase.